The following is a 336-amino-acid chain: Glyoxylate reductase (336 aa).

Residues 158 to 161 (FGRI), 180 to 182 (SRT), and 239 to 241 (IAR) contribute to the NADP(+) site. Catalysis depends on residues arginine 241 and glutamate 270. Catalysis depends on histidine 288, which acts as the Proton donor. An NADP(+)-binding site is contributed by 288 to 290 (HIG).

The protein belongs to the D-isomer specific 2-hydroxyacid dehydrogenase family. GyaR subfamily. Homodimer.

The protein resides in the cytoplasm. The catalysed reaction is glycolate + NAD(+) = glyoxylate + NADH + H(+). This is Glyoxylate reductase from Pyrococcus furiosus (strain ATCC 43587 / DSM 3638 / JCM 8422 / Vc1).